The primary structure comprises 229 residues: 2-C-methyl-D-erythritol 4-phosphate cytidylyltransferase (229 aa).

This sequence belongs to the IspD/TarI cytidylyltransferase family. IspD subfamily.

It carries out the reaction 2-C-methyl-D-erythritol 4-phosphate + CTP + H(+) = 4-CDP-2-C-methyl-D-erythritol + diphosphate. It participates in isoprenoid biosynthesis; isopentenyl diphosphate biosynthesis via DXP pathway; isopentenyl diphosphate from 1-deoxy-D-xylulose 5-phosphate: step 2/6. In terms of biological role, catalyzes the formation of 4-diphosphocytidyl-2-C-methyl-D-erythritol from CTP and 2-C-methyl-D-erythritol 4-phosphate (MEP). This Neisseria gonorrhoeae (strain NCCP11945) protein is 2-C-methyl-D-erythritol 4-phosphate cytidylyltransferase.